Here is an 88-residue protein sequence, read N- to C-terminus: Arminin 1b (88 aa).

The signal sequence occupies residues 1-18; the sequence is MKTVLAFLFLTFIAFTHA. Positions 19 to 57 are excised as a propeptide; sequence ESYEDVKEEIKNEVEREIFEDLEEESDVLESNVRELNDA. The residue at position 85 (Val85) is a Valine amide.

It belongs to the arminin family. Expressed in entodermal epithelium along the body column.

It is found in the secreted. The protein resides in the target cell membrane. Antimicrobial peptide with a broad-spectrum antimicrobial activity. Keeps its antibacterial activity under a wide range of salt concentrations that mimic physiological conditions of human blood, which is surprising, since Hydra is an obligate freshwater animal with nearly no salt tolerance. Does not affect red blood cells. The protein is Arminin 1b of Hydra vulgaris (Hydra).